We begin with the raw amino-acid sequence, 333 residues long: Holliday junction branch migration complex subunit RuvB (333 aa).

Residues 1 to 181 (MTRILDNDLI…FGITGHMEYY (181 aa)) form a large ATPase domain (RuvB-L) region. ATP is bound by residues leucine 20, arginine 21, glycine 62, lysine 65, threonine 66, threonine 67, 128–130 (EDF), arginine 171, tyrosine 181, and arginine 218. A Mg(2+)-binding site is contributed by threonine 66. The tract at residues 182–252 (QTADLTEIVE…ITDKALTMLD (71 aa)) is small ATPAse domain (RuvB-S). The head domain (RuvB-H) stretch occupies residues 255-333 (QEGLDYVDQK…HLGYPYEKKH (79 aa)). Residues arginine 291, arginine 310, arginine 312, and arginine 315 each coordinate DNA.

Belongs to the RuvB family. Homohexamer. Forms an RuvA(8)-RuvB(12)-Holliday junction (HJ) complex. HJ DNA is sandwiched between 2 RuvA tetramers; dsDNA enters through RuvA and exits via RuvB. An RuvB hexamer assembles on each DNA strand where it exits the tetramer. Each RuvB hexamer is contacted by two RuvA subunits (via domain III) on 2 adjacent RuvB subunits; this complex drives branch migration. In the full resolvosome a probable DNA-RuvA(4)-RuvB(12)-RuvC(2) complex forms which resolves the HJ.

The protein resides in the cytoplasm. It carries out the reaction ATP + H2O = ADP + phosphate + H(+). In terms of biological role, the RuvA-RuvB-RuvC complex processes Holliday junction (HJ) DNA during genetic recombination and DNA repair, while the RuvA-RuvB complex plays an important role in the rescue of blocked DNA replication forks via replication fork reversal (RFR). RuvA specifically binds to HJ cruciform DNA, conferring on it an open structure. The RuvB hexamer acts as an ATP-dependent pump, pulling dsDNA into and through the RuvAB complex. RuvB forms 2 homohexamers on either side of HJ DNA bound by 1 or 2 RuvA tetramers; 4 subunits per hexamer contact DNA at a time. Coordinated motions by a converter formed by DNA-disengaged RuvB subunits stimulates ATP hydrolysis and nucleotide exchange. Immobilization of the converter enables RuvB to convert the ATP-contained energy into a lever motion, pulling 2 nucleotides of DNA out of the RuvA tetramer per ATP hydrolyzed, thus driving DNA branch migration. The RuvB motors rotate together with the DNA substrate, which together with the progressing nucleotide cycle form the mechanistic basis for DNA recombination by continuous HJ branch migration. Branch migration allows RuvC to scan DNA until it finds its consensus sequence, where it cleaves and resolves cruciform DNA. This chain is Holliday junction branch migration complex subunit RuvB, found in Streptococcus equi subsp. zooepidemicus (strain MGCS10565).